The chain runs to 153 residues: UPF0756 membrane protein LCABL_15860 (153 aa).

4 consecutive transmembrane segments (helical) span residues 4-24 (WLFL…SLII), 52-72 (WGVT…EIGF), 85-105 (WIAI…VGLL), and 115-135 (LVFG…GPVI).

It belongs to the UPF0756 family.

It is found in the cell membrane. This is UPF0756 membrane protein LCABL_15860 from Lacticaseibacillus casei (strain BL23) (Lactobacillus casei).